The following is a 381-amino-acid chain: O-phospho-L-seryl-tRNA:Cys-tRNA synthase (381 aa).

Pyridoxal 5'-phosphate-binding positions include 86–87, asparagine 192, and 215–217; these read AR and SGH. N6-(pyridoxal phosphate)lysine is present on lysine 218.

The protein belongs to the SepCysS family. As to quaternary structure, homodimer. Interacts with SepRS. It depends on pyridoxal 5'-phosphate as a cofactor.

The enzyme catalyses O-phospho-L-seryl-tRNA(Cys) + hydrogen sulfide + H(+) = L-cysteinyl-tRNA(Cys) + phosphate. In terms of biological role, converts O-phospho-L-seryl-tRNA(Cys) (Sep-tRNA(Cys)) to L-cysteinyl-tRNA(Cys) (Cys-tRNA(Cys)). This is O-phospho-L-seryl-tRNA:Cys-tRNA synthase from Methanococcus vannielii (strain ATCC 35089 / DSM 1224 / JCM 13029 / OCM 148 / SB).